Consider the following 473-residue polypeptide: PPE family protein PPE37 (473 aa).

The Iron-binding motif signature appears at 203-206 (DFLE). Helical transmembrane passes span 227–247 (VLDW…AYLV) and 250–270 (PLIY…PAGL).

This sequence belongs to the mycobacterial PPE family.

The protein resides in the cell membrane. Functionally, essential for efficient heme-iron acquisition (HIA). Binds iron. Strains with a functional PPE37 can utilize low concentrations of hemin very efficiently in broth and on agar plates. During infection, might interfere with the pro-inflammatory cytokine response in infected macrophages. In terms of biological role, in vitro, incubation of the protein in the presence of M.tuberculosis proteases leads to the cleavage of PPE37 into two segments, the N- and C-terminal segments. Transfection of human monocytic THP-1 cell lines with the N-terminal segment leads to the proliferation and differentiation of THP-1 cells into adherent stellate cells with dendritic cell-like morphology. Transfection of THP-1 cells with the C-terminal segment leads to the apoptosis of the cells. Recombinant protein antigens display strong B-cell response in tuberculosis patients and immunized mice. The protein is PPE family protein PPE37 of Mycobacterium tuberculosis (strain ATCC 25618 / H37Rv).